Reading from the N-terminus, the 557-residue chain is E3 ubiquitin-protein ligase rnf168 (557 aa).

The RING-type zinc-finger motif lies at 16 to 55 (CPICQEILLEPVTLPCKHTLCNPCFQMTVEKASLCCPFCR). The LR motif 1 signature appears at 112 to 130 (LCQPGEIRQEYEAEVSKIE). A UMI motif motif is present at residues 145 to 153 (EDYIQKLLA). Short sequence motifs (MIU motif) lie at residues 170-193 (MEEQLKIDEELARTLSVDLDVSNA) and 422-445 (RRRQEEQDRLLALQLQRELDKELK). The LR motif 2 motif lies at 449–460 (RGKGSPDEYELR). Positions 482–543 (PLRKEIPVQD…GINVLKPINK (62 aa)) are disordered. Residues 490–500 (QDNSRNTQSEY) show a composition bias toward polar residues. Basic residues predominate over residues 508–521 (PSRKNSVRSARVRQ).

The protein belongs to the RNF168 family. In terms of assembly, monomer.

The protein resides in the nucleus. The catalysed reaction is S-ubiquitinyl-[E2 ubiquitin-conjugating enzyme]-L-cysteine + [acceptor protein]-L-lysine = [E2 ubiquitin-conjugating enzyme]-L-cysteine + N(6)-ubiquitinyl-[acceptor protein]-L-lysine.. Its pathway is protein modification; protein ubiquitination. In terms of biological role, E3 ubiquitin-protein ligase required for accumulation of repair proteins to sites of DNA damage. Acts with ube2n/ubc13 to amplify the rnf8-dependent histone ubiquitination. Recruited to sites of DNA damage at double-strand breaks (DSBs) by binding to ubiquitinated histone H2A and ubiquitinates histone H2A and H2AX, leading to amplify the rnf8-dependent H2A ubiquitination and promoting the formation of 'Lys-63'-linked ubiquitin conjugates. This leads to concentrate ubiquitinated histones H2A and H2AX at DNA lesions to the threshold required for recruitment of tp53bp1 and brca1. Catalyzes monoubiquitination of 'Lys-13' and 'Lys-15' of nucleosomal histone H2A (H2AK13Ub and H2AK15Ub, respectively). The polypeptide is E3 ubiquitin-protein ligase rnf168 (Xenopus laevis (African clawed frog)).